A 369-amino-acid polypeptide reads, in one-letter code: Quinolinate synthase (369 aa).

Positions 47 and 64 each coordinate iminosuccinate. Position 111 (cysteine 111) interacts with [4Fe-4S] cluster. Residues 142–144 and serine 163 each bind iminosuccinate; that span reads YVN. Cysteine 231 is a [4Fe-4S] cluster binding site. Iminosuccinate-binding positions include 257–259 and threonine 274; that span reads HPE. Residue cysteine 321 participates in [4Fe-4S] cluster binding.

Belongs to the quinolinate synthase family. Type 3 subfamily. It depends on [4Fe-4S] cluster as a cofactor.

The protein resides in the cytoplasm. It catalyses the reaction iminosuccinate + dihydroxyacetone phosphate = quinolinate + phosphate + 2 H2O + H(+). Its pathway is cofactor biosynthesis; NAD(+) biosynthesis; quinolinate from iminoaspartate: step 1/1. In terms of biological role, catalyzes the condensation of iminoaspartate with dihydroxyacetone phosphate to form quinolinate. This Bacillus pumilus (strain SAFR-032) protein is Quinolinate synthase.